The primary structure comprises 1336 residues: pre-mRNA 3' end processing protein WDR33 (1336 aa).

A2 bears the N-acetylalanine mark. S7 is modified (phosphoserine). At K46 the chain carries N6-acetyllysine. WD repeat units lie at residues 117–156 (KVKC…FETI), 159–198 (AHDS…VKMF), 200–239 (AHKE…EERI), 242–283 (GHGA…SLAT), 286–325 (AHKN…EELQ), 329–369 (GHKK…EVGG), and 373–412 (AHEG…DKMR). Residues K526, K530, and K560 each participate in a glycyl lysine isopeptide (Lys-Gly) (interchain with G-Cter in SUMO2) cross-link. The tract at residues 568-1336 (QVEQIQPPPS…GASRGGGRGR (769 aa)) is disordered. Residues 573 to 590 (QPPPSSGTPLLGPQPFPG) are compositionally biased toward pro residues. Positions 594-607 (MSQIPQGFQQPHPS) are enriched in polar residues. The span at 608–643 (QQMPMNMAQMGPPGPQGQFRPPGPQGQMGPQGPPLH) shows a compositional bias: low complexity. A Collagen-like domain is found at 618 to 770 (GPPGPQGQFR…GPGSQGIQGP (153 aa)). A compositionally biased stretch (pro residues) spans 683 to 695 (PHGPLGPQGPPGP). Low complexity-rich tracts occupy residues 696 to 707 (QGSSGPQGHMGP) and 726 to 751 (QGHL…GMQG). An Omega-N-methylarginine modification is found at R782. Residues 854 to 869 (GPPGSQSQQGPPQGSL) show a composition bias toward low complexity. R915 is subject to Asymmetric dimethylarginine. Residues 932-941 (PGLGQQGAQG) are compositionally biased toward low complexity. Composition is skewed to basic and acidic residues over residues 971–989 (SERR…ERGP) and 998–1034 (GPPD…EFEG). Omega-N-methylarginine is present on R987. An Omega-N-methylarginine modification is found at R1035. 2 stretches are compositionally biased toward basic and acidic residues: residues 1056–1068 (PDHR…DGRG) and 1078–1122 (EGRR…RGRD). A compositionally biased stretch (acidic residues) spans 1130–1140 (FGPEENFDASE). Over residues 1141-1150 (EAARGRDLRG) the composition is skewed to basic and acidic residues. Positions 1151–1160 (RGRGTPRGGR) are enriched in basic residues. Basic and acidic residues-rich tracts occupy residues 1169–1217 (EFPR…RERS) and 1242–1259 (SEHR…DRGG). Phosphoserine is present on S1210. At R1262 the chain carries Omega-N-methylarginine. Residues 1281-1293 (DGEHHDGYHRDEP) are compositionally biased toward basic and acidic residues. Low complexity predominate over residues 1301 to 1326 (GTPSRGGRSGSNWGRGSNMNSGPPRR). R1315 bears the Asymmetric dimethylarginine; alternate mark. Omega-N-methylarginine; alternate is present on R1315.

It belongs to the WD repeat WDR33 family. Component of the cleavage and polyadenylation specificity factor (CPSF) module of the pre-mRNA 3'-end processing complex. Interacts with CPSF3/CPSF73. Most highly expressed in testis.

The protein localises to the nucleus. Functionally, essential for both cleavage and polyadenylation of pre-mRNA 3' ends. The protein is pre-mRNA 3' end processing protein WDR33 (WDR33) of Homo sapiens (Human).